Reading from the N-terminus, the 495-residue chain is Cytochrome P450 monooxygenase 113 (495 aa).

Residues 2-22 (FLQIAACFTVIGLLYGLVSNL) traverse the membrane as a helical segment. Residue Cys428 participates in heme binding.

This sequence belongs to the cytochrome P450 family. Requires heme as cofactor.

The protein localises to the membrane. The protein operates within secondary metabolite biosynthesis. In terms of biological role, cytochrome P450 monooxygenase that is able to use 4-ethoxybenzoic acid as a substrate for oxidation. This Postia placenta (strain ATCC 44394 / Madison 698-R) (Brown rot fungus) protein is Cytochrome P450 monooxygenase 113.